Here is a 274-residue protein sequence, read N- to C-terminus: tRNA pseudouridine synthase A (274 aa).

The Nucleophile role is filled by aspartate 56. Tyrosine 109 contributes to the substrate binding site.

Belongs to the tRNA pseudouridine synthase TruA family.

The catalysed reaction is uridine(38/39/40) in tRNA = pseudouridine(38/39/40) in tRNA. Functionally, formation of pseudouridine at positions 38, 39 and 40 in the anticodon stem and loop of transfer RNAs. The polypeptide is tRNA pseudouridine synthase A (Methanosphaera stadtmanae (strain ATCC 43021 / DSM 3091 / JCM 11832 / MCB-3)).